The chain runs to 420 residues: Dynein axonemal assembly factor 4 (420 aa).

Residues 3–87 (LQVSDYSWQQ…KEAAMWETLS (85 aa)) form the CS domain. The mediates interaction with ESR1 and STUB1 stretch occupies residues 7-103 (DYSWQQTKTA…EMMQRIREKS (97 aa)). TPR repeat units lie at residues 290 to 323 (PEWL…NNKM), 324 to 357 (PLLY…LMPP), and 366 to 399 (MKAH…DPSN).

As to quaternary structure, interacts with ZMYND10. Interacts with STUB1. Interacts with ESR1 and ESR2. Interacts with DNAAF2. Interacts with CCT3, CCT4, CCT5 and CCT8. Interacts with DNAAF6/PIH1D3.

Its subcellular location is the nucleus. The protein resides in the cytoplasm. The protein localises to the cell projection. It is found in the neuron projection. It localises to the dynein axonemal particle. Its function is as follows. Involved in neuronal migration during development of the cerebral neocortex. May regulate the stability and proteasomal degradation of the estrogen receptors that play an important role in neuronal differentiation, survival and plasticity. Axonemal dynein assembly factor required for ciliary motility. The polypeptide is Dynein axonemal assembly factor 4 (Pan troglodytes (Chimpanzee)).